The chain runs to 402 residues: MQMSPALTCLVLGLALVFGEGSAVHHPPSYVAHLASDFGVRVFQQVAQASKDRNVVFSPYGVASVLAMLQLTTGGETQQQIQAAMGFKIDDKGMAPALRHLYKELMGPWNKDEISTTDAIFVQRDLKLVQGFMPHFFRLFRSTVKQVDFSEVERARFIINDWVKTHTKGMISNLLGKGAVDQLTRLVLVNALYFNGQWKTPFPDSSTHRRLFHKSDGSTVSVPMMAQTNKFNYTEFTTPDGHYYDILELPYHGDTLSMFIAAPYEKEVPLSALTNILSAQLISHWKGNMTRLPRLLVLPKFSLETEVDLRKPLENLGMTDMFRQFQADFTSLSDQEPLHVAQALQKVKIEVNESGTVASSSTAVIVSARMAPEEIIMDRPFLFVVRHNPTGTVLFMGQVMEP.

The first 23 residues, 1 to 23 (MQMSPALTCLVLGLALVFGEGSA), serve as a signal peptide directing secretion. 3 N-linked (GlcNAc...) asparagine glycosylation sites follow: Asn232, Asn288, and Asn352.

It belongs to the serpin family. In terms of assembly, forms a heterodimer with TMPRSS7. Interacts with VTN. Binds LRP1B; binding is followed by internalization and degradation. Interacts with PPP1CB. In complex with PLAU/uPA, interacts with PLAUR/uPAR. Interacts with SORL1 and LRP1, either alone or in complex with PLAU; these interactions are abolished in the presence of LRPAP1/RAP. The ternary complex composed of PLAUR-PLAU-PAI1 also interacts with SORL1. Interacts with PLAT/tPA. Also interacts with SORL1, when complexed to PLAT/tPA. Post-translationally, inactivated by proteolytic attack of the urokinase-type (u-PA) and the tissue-type (TPA), cleaving the 369-Arg-|-Met-370 bond. In terms of tissue distribution, expressed in endothelial cells. Found in plasma, platelets, and hepatoma and fibrosarcoma cells.

It localises to the secreted. Its function is as follows. Serine protease inhibitor. Inhibits TMPRSS7. Is a primary inhibitor of tissue-type plasminogen activator (PLAT) and urokinase-type plasminogen activator (PLAU). As PLAT inhibitor, it is required for fibrinolysis down-regulation and is responsible for the controlled degradation of blood clots. As PLAU inhibitor, it is involved in the regulation of cell adhesion and spreading. Acts as a regulator of cell migration, independently of its role as protease inhibitor. It is required for stimulation of keratinocyte migration during cutaneous injury repair. It is involved in cellular and replicative senescence. Plays a role in alveolar type 2 cells senescence in the lung. Is involved in the regulation of cementogenic differentiation of periodontal ligament stem cells, and regulates odontoblast differentiation and dentin formation during odontogenesis. The chain is Plasminogen activator inhibitor 1 (SERPINE1) from Homo sapiens (Human).